The chain runs to 341 residues: Basic membrane protein B (341 aa).

The signal sequence occupies residues 1–14; it reads MRIVIFILGILLTS. Cysteine 15 carries N-palmitoyl cysteine lipidation. Cysteine 15 carries S-diacylglycerol cysteine lipidation.

The protein belongs to the BMP lipoprotein family. Monomer.

Its subcellular location is the cell inner membrane. In terms of biological role, may be part of an ABC-type nucleoside uptake system involved in the purine salvage pathway. The sequence is that of Basic membrane protein B (bmpB) from Borrelia garinii subsp. bavariensis (strain ATCC BAA-2496 / DSM 23469 / PBi) (Borreliella bavariensis).